We begin with the raw amino-acid sequence, 347 residues long: Large ribosomal subunit protein uL3 (347 aa).

The tract at residues 325–347 (RPPKKKPPVERPQITYISRESKQ) is disordered.

This sequence belongs to the universal ribosomal protein uL3 family. In terms of assembly, part of the 50S ribosomal subunit. Forms a cluster with proteins L14 and L24e.

Its function is as follows. One of the primary rRNA binding proteins, it binds directly near the 3'-end of the 23S rRNA, where it nucleates assembly of the 50S subunit. The sequence is that of Large ribosomal subunit protein uL3 from Thermococcus onnurineus (strain NA1).